The chain runs to 246 residues: Probable transcriptional regulatory protein WD_0484 (246 aa).

The segment at 1-22 (MAGHSQFSNIKHRKGAQDAKRS) is disordered.

It belongs to the TACO1 family.

It localises to the cytoplasm. This Wolbachia pipientis wMel protein is Probable transcriptional regulatory protein WD_0484.